The following is a 169-amino-acid chain: Der GTPase-activating protein YihI (169 aa).

2 disordered regions span residues 1–83 and 150–169; these read MNPL…PTKP and DEEEREEEKQDDIMQLLKGN. Residues 21-30 are compositionally biased toward basic and acidic residues; sequence NREELNAEGR. The span at 31–40 shows a compositional bias: basic residues; the sequence is ARKREKKHRG. Composition is skewed to basic and acidic residues over residues 51 to 66 and 150 to 161; these read SGDKHPSGKQQRDPRL and DEEEREEEKQDD.

The protein belongs to the YihI family. Interacts with Der.

Functionally, a GTPase-activating protein (GAP) that modifies Der/EngA GTPase function. May play a role in ribosome biogenesis. In Photorhabdus laumondii subsp. laumondii (strain DSM 15139 / CIP 105565 / TT01) (Photorhabdus luminescens subsp. laumondii), this protein is Der GTPase-activating protein YihI.